The chain runs to 317 residues: Lipase 1 (317 aa).

The N-terminal stretch at 1-18 (MLLKRLCFAALFSLSMVG) is a signal peptide. Residue C19 is the site of N-palmitoyl cysteine attachment. C19 is lipidated: S-diacylglycerol cysteine. One can recognise an AB hydrolase-1 domain in the interval 69–296 (PLLLIHGFGG…MEDVGHVPMV (228 aa)). H74 is an active-site residue. The Nucleophile role is filled by S142. Active-site charge relay system residues include E270 and H292.

It is found in the cell outer membrane. The enzyme catalyses a triacylglycerol + H2O = a diacylglycerol + a fatty acid + H(+). The protein is Lipase 1 (lip1) of Psychrobacter immobilis.